A 367-amino-acid chain; its full sequence is Phosphoribosylaminoimidazole-succinocarboxamide synthase (367 aa).

This sequence belongs to the SAICAR synthetase family.

It catalyses the reaction 5-amino-1-(5-phospho-D-ribosyl)imidazole-4-carboxylate + L-aspartate + ATP = (2S)-2-[5-amino-1-(5-phospho-beta-D-ribosyl)imidazole-4-carboxamido]succinate + ADP + phosphate + 2 H(+). Its pathway is purine metabolism; IMP biosynthesis via de novo pathway; 5-amino-1-(5-phospho-D-ribosyl)imidazole-4-carboxamide from 5-amino-1-(5-phospho-D-ribosyl)imidazole-4-carboxylate: step 1/2. This Aeromonas salmonicida (strain A449) protein is Phosphoribosylaminoimidazole-succinocarboxamide synthase.